We begin with the raw amino-acid sequence, 64 residues long: Large ribosomal subunit protein bL28 (64 aa).

Belongs to the bacterial ribosomal protein bL28 family.

This Bifidobacterium adolescentis (strain ATCC 15703 / DSM 20083 / NCTC 11814 / E194a) protein is Large ribosomal subunit protein bL28.